Reading from the N-terminus, the 862-residue chain is Kinesin-like protein KIN-7J (862 aa).

Residues 9–331 enclose the Kinesin motor domain; it reads RIVVSVRLRP…LLFANCAKDV (323 aa). 95-102 is an ATP binding site; that stretch reads GQTSSGKT. The stretch at 340–415 forms a coiled coil; that stretch reads VMSDKALVKH…NFRKVASDGD (76 aa). Basic and acidic residues-rich tracts occupy residues 475-499 and 518-531; these read EEHE…KEVQ and PEKK…KHSE. Disordered regions lie at residues 475–532 and 596–643; these read EEHE…HSES and DDSA…STCN. The span at 598-610 shows a compositional bias: polar residues; it reads SASTTPSSETFRY. A compositionally biased stretch (basic and acidic residues) spans 613 to 629; sequence RRPEKVRKSLSPDEIAD.

This sequence belongs to the TRAFAC class myosin-kinesin ATPase superfamily. Kinesin family. KIN-7 subfamily.

This Oryza sativa subsp. japonica (Rice) protein is Kinesin-like protein KIN-7J.